An 872-amino-acid polypeptide reads, in one-letter code: Dynein regulatory complex subunit 7 (872 aa).

Disordered regions lie at residues 1 to 40 (MEVLKEKVEEEEAAEREEAAERAERGEKTKRPMEVRREET), 231 to 281 (ESVK…QEEA), and 385 to 410 (EEEDEGMNDDDDVENLGKEDEDKSFD). The stretch at 1–64 (MEVLKEKVEE…SEIEVSVPEK (64 aa)) forms a coiled coil. 3 stretches are compositionally biased toward basic and acidic residues: residues 16–40 (REEAAERAERGEKTKRPMEVRREET), 231–240 (ESVKEEEKAP), and 248–281 (PPRDLTSRFEQEQEMKRQEAIKAEEENRRKQEEA). The stretch at 254-292 (SRFEQEQEMKRQEAIKAEEENRRKQEEARLLEQENAKTD) forms a coiled coil. Residues 385–398 (EEEDEGMNDDDDVE) are compositionally biased toward acidic residues. Positions 399-409 (NLGKEDEDKSF) are enriched in basic and acidic residues. Coiled-coil stretches lie at residues 676 to 706 (LKNEEKLSRHQAWESELEVLEILKLREEEEE) and 780 to 805 (QRLIDKANLIQARFEKETQELQKKQQ).

Belongs to the DRC7 family. As to quaternary structure, component of the nexin-dynein regulatory complex (N-DRC). Interacts with TCTE1/DRC5. Interacts with DRC3 and GAS8/DRC4.

Its subcellular location is the cell projection. It is found in the cilium. The protein resides in the flagellum. It localises to the cytoplasm. The protein localises to the cytoskeleton. Its subcellular location is the cilium axoneme. It is found in the flagellum axoneme. Functionally, component of the nexin-dynein regulatory complex (N-DRC) a key regulator of ciliary/flagellar motility which maintains the alignment and integrity of the distal axoneme and regulates microtubule sliding in motile axonemes. Involved in the regulation of flagellar motility. Essential for male fertility, sperm head morphogenesis and sperm flagellum formation. The chain is Dynein regulatory complex subunit 7 (DRC7) from Bos taurus (Bovine).